Reading from the N-terminus, the 372-residue chain is tRNA-specific 2-thiouridylase MnmA (372 aa).

Residues 11–18 (GMSGGVDS) and methionine 37 each bind ATP. An interaction with target base in tRNA region spans residues 97–99 (NPD). The active-site Nucleophile is the cysteine 102. An intrachain disulfide couples cysteine 102 to cysteine 199. An ATP-binding site is contributed by glycine 126. The interval 149-151 (KDQ) is interaction with tRNA. The Cysteine persulfide intermediate role is filled by cysteine 199. Residues 309–310 (RY) form an interaction with tRNA region.

It belongs to the MnmA/TRMU family.

The protein localises to the cytoplasm. It carries out the reaction S-sulfanyl-L-cysteinyl-[protein] + uridine(34) in tRNA + AH2 + ATP = 2-thiouridine(34) in tRNA + L-cysteinyl-[protein] + A + AMP + diphosphate + H(+). Functionally, catalyzes the 2-thiolation of uridine at the wobble position (U34) of tRNA, leading to the formation of s(2)U34. This Staphylococcus aureus (strain MSSA476) protein is tRNA-specific 2-thiouridylase MnmA.